We begin with the raw amino-acid sequence, 307 residues long: Putative gluconeogenesis factor (307 aa).

Belongs to the gluconeogenesis factor family.

It localises to the cytoplasm. In terms of biological role, required for morphogenesis under gluconeogenic growth conditions. This Yersinia pestis protein is Putative gluconeogenesis factor.